We begin with the raw amino-acid sequence, 617 residues long: Putative metal ion transporter C17A12.14 (617 aa).

Positions 1–141 (MPSNTSRSVP…GKNTRDQPSP (141 aa)) are disordered. Serine 105 is subject to Phosphoserine. A compositionally biased stretch (basic and acidic residues) spans 117–136 (SHPEDIQRKEFETENGKNTR). Phosphoserine is present on residues serine 152, serine 162, serine 226, and serine 241. The next 2 membrane-spanning stretches (helical) occupy residues 560–580 (TILG…GMNV) and 590–610 (LGWF…SFIL).

This sequence belongs to the CorA metal ion transporter (MIT) (TC 1.A.35) family. As to quaternary structure, interacts with sad1.

The protein resides in the membrane. The sequence is that of Putative metal ion transporter C17A12.14 from Schizosaccharomyces pombe (strain 972 / ATCC 24843) (Fission yeast).